The primary structure comprises 210 residues: Superoxide dismutase [Mn], mitochondrial (210 aa).

H29, H77, D163, and H167 together coordinate Mn(2+).

This sequence belongs to the iron/manganese superoxide dismutase family. In terms of assembly, homotetramer. Mn(2+) is required as a cofactor.

Its subcellular location is the mitochondrion matrix. It catalyses the reaction 2 superoxide + 2 H(+) = H2O2 + O2. Functionally, destroys superoxide anion radicals which are normally produced within the cells and which are toxic to biological systems. The sequence is that of Superoxide dismutase [Mn], mitochondrial (sodB) from Aspergillus fumigatus (strain ATCC MYA-4609 / CBS 101355 / FGSC A1100 / Af293) (Neosartorya fumigata).